The primary structure comprises 549 residues: Arginine--tRNA ligase (549 aa).

The 'HIGH' region signature appears at 113–123 (ANPDGPLHIGH).

This sequence belongs to the class-I aminoacyl-tRNA synthetase family.

The protein resides in the cytoplasm. The enzyme catalyses tRNA(Arg) + L-arginine + ATP = L-arginyl-tRNA(Arg) + AMP + diphosphate. The polypeptide is Arginine--tRNA ligase (argS) (Archaeoglobus fulgidus (strain ATCC 49558 / DSM 4304 / JCM 9628 / NBRC 100126 / VC-16)).